The following is a 661-amino-acid chain: UvrABC system protein B (661 aa).

The Helicase ATP-binding domain occupies 31 to 186 (DNIEGGEKAQ…LLNALVDIQF (156 aa)). ATP is bound at residue 44-51 (GATGTGKT). The Beta-hairpin signature appears at 97–120 (YYDYYQPEAYVPSSDTYIEKDSSV). The 167-residue stretch at 435–601 (QMDDLLGEIN…TIKKEIRDLI (167 aa)) folds into the Helicase C-terminal domain. In terms of domain architecture, UVR spans 626 to 661 (KAMIKKLEGQMQEAAEVLDFELAAQIRDMVIELKNM).

Belongs to the UvrB family. Forms a heterotetramer with UvrA during the search for lesions. Interacts with UvrC in an incision complex.

The protein resides in the cytoplasm. Functionally, the UvrABC repair system catalyzes the recognition and processing of DNA lesions. A damage recognition complex composed of 2 UvrA and 2 UvrB subunits scans DNA for abnormalities. Upon binding of the UvrA(2)B(2) complex to a putative damaged site, the DNA wraps around one UvrB monomer. DNA wrap is dependent on ATP binding by UvrB and probably causes local melting of the DNA helix, facilitating insertion of UvrB beta-hairpin between the DNA strands. Then UvrB probes one DNA strand for the presence of a lesion. If a lesion is found the UvrA subunits dissociate and the UvrB-DNA preincision complex is formed. This complex is subsequently bound by UvrC and the second UvrB is released. If no lesion is found, the DNA wraps around the other UvrB subunit that will check the other stand for damage. The polypeptide is UvrABC system protein B (Streptococcus suis (strain 98HAH33)).